Reading from the N-terminus, the 223-residue chain is DNA mismatch repair protein MutH (223 aa).

It belongs to the MutH family.

The protein localises to the cytoplasm. Sequence-specific endonuclease that cleaves unmethylated GATC sequences. It is involved in DNA mismatch repair. The sequence is that of DNA mismatch repair protein MutH from Shewanella baltica (strain OS185).